The following is a 459-amino-acid chain: Methylenetetrahydrofolate--tRNA-(uracil-5-)-methyltransferase TrmFO (459 aa).

15-20 (GAGLAG) is an FAD binding site.

The protein belongs to the MnmG family. TrmFO subfamily. Requires FAD as cofactor.

Its subcellular location is the cytoplasm. It catalyses the reaction uridine(54) in tRNA + (6R)-5,10-methylene-5,6,7,8-tetrahydrofolate + NADH + H(+) = 5-methyluridine(54) in tRNA + (6S)-5,6,7,8-tetrahydrofolate + NAD(+). The enzyme catalyses uridine(54) in tRNA + (6R)-5,10-methylene-5,6,7,8-tetrahydrofolate + NADPH + H(+) = 5-methyluridine(54) in tRNA + (6S)-5,6,7,8-tetrahydrofolate + NADP(+). Catalyzes the folate-dependent formation of 5-methyl-uridine at position 54 (M-5-U54) in all tRNAs. The chain is Methylenetetrahydrofolate--tRNA-(uracil-5-)-methyltransferase TrmFO from Syntrophotalea carbinolica (strain DSM 2380 / NBRC 103641 / GraBd1) (Pelobacter carbinolicus).